Here is a 307-residue protein sequence, read N- to C-terminus: Myeloid-associated differentiation marker-like protein 2 (307 aa).

MARVEL domains lie at 17–154 (AVTS…ARPG) and 159–303 (YMAT…RIRF). The next 7 helical transmembrane spans lie at 53-73 (FCVA…ACEF), 90-110 (AFAM…PLYF), 129-149 (LAAS…VALT), 163-183 (VSGL…GALV), 198-218 (VAVY…SVLG), 232-252 (VVYT…WPVF), and 278-298 (LVVA…LAYS).

Belongs to the MAL family.

It is found in the membrane. This is Myeloid-associated differentiation marker-like protein 2 (MYADML2) from Bos taurus (Bovine).